A 321-amino-acid polypeptide reads, in one-letter code: Lipoyl synthase (321 aa).

Positions 68, 73, 79, 94, 98, 101, and 308 each coordinate [4Fe-4S] cluster. The region spanning 80 to 297 (FNHGTATFMI…KALADELGFT (218 aa)) is the Radical SAM core domain.

This sequence belongs to the radical SAM superfamily. Lipoyl synthase family. The cofactor is [4Fe-4S] cluster.

The protein resides in the cytoplasm. The enzyme catalyses [[Fe-S] cluster scaffold protein carrying a second [4Fe-4S](2+) cluster] + N(6)-octanoyl-L-lysyl-[protein] + 2 oxidized [2Fe-2S]-[ferredoxin] + 2 S-adenosyl-L-methionine + 4 H(+) = [[Fe-S] cluster scaffold protein] + N(6)-[(R)-dihydrolipoyl]-L-lysyl-[protein] + 4 Fe(3+) + 2 hydrogen sulfide + 2 5'-deoxyadenosine + 2 L-methionine + 2 reduced [2Fe-2S]-[ferredoxin]. It participates in protein modification; protein lipoylation via endogenous pathway; protein N(6)-(lipoyl)lysine from octanoyl-[acyl-carrier-protein]: step 2/2. Its function is as follows. Catalyzes the radical-mediated insertion of two sulfur atoms into the C-6 and C-8 positions of the octanoyl moiety bound to the lipoyl domains of lipoate-dependent enzymes, thereby converting the octanoylated domains into lipoylated derivatives. The protein is Lipoyl synthase of Shewanella oneidensis (strain ATCC 700550 / JCM 31522 / CIP 106686 / LMG 19005 / NCIMB 14063 / MR-1).